Here is a 415-residue protein sequence, read N- to C-terminus: Hydroxysteroid dehydrogenase-like protein 2 (415 aa).

NADP(+) contacts are provided by residues 17–23, lysine 42, and aspartate 74; that span reads GASRGIG. The Proton acceptor role is filled by tyrosine 168. NADP(+) is bound at residue lysine 172. The SCP2 domain occupies 304 to 412; sequence AGPVSEMFNT…KLEKMMAMMK (109 aa).

This sequence belongs to the short-chain dehydrogenases/reductases (SDR) family.

It localises to the peroxisome. It is found in the mitochondrion. Its function is as follows. Has apparently no steroid dehydrogenase activity. Might act as a metabolic regulator that affects systemic adaptation to nutritional cues. This chain is Hydroxysteroid dehydrogenase-like protein 2 (hsdl2), found in Danio rerio (Zebrafish).